We begin with the raw amino-acid sequence, 104 residues long: UPF0145 protein HCH_01985 (104 aa).

Belongs to the UPF0145 family.

The polypeptide is UPF0145 protein HCH_01985 (Hahella chejuensis (strain KCTC 2396)).